The primary structure comprises 101 residues: NAD(P)H-quinone oxidoreductase subunit 4L, chloroplastic (101 aa).

Helical transmembrane passes span 2–22 (MLEHVLVLSAYLFSIGIYGLI), 32–52 (MCLELILNAVNINFVTFSDFF), and 61–81 (IFSIFVIAIAAAEAAIGPAIV).

The protein belongs to the complex I subunit 4L family. As to quaternary structure, NDH is composed of at least 16 different subunits, 5 of which are encoded in the nucleus.

It is found in the plastid. It localises to the chloroplast thylakoid membrane. The catalysed reaction is a plastoquinone + NADH + (n+1) H(+)(in) = a plastoquinol + NAD(+) + n H(+)(out). The enzyme catalyses a plastoquinone + NADPH + (n+1) H(+)(in) = a plastoquinol + NADP(+) + n H(+)(out). In terms of biological role, NDH shuttles electrons from NAD(P)H:plastoquinone, via FMN and iron-sulfur (Fe-S) centers, to quinones in the photosynthetic chain and possibly in a chloroplast respiratory chain. The immediate electron acceptor for the enzyme in this species is believed to be plastoquinone. Couples the redox reaction to proton translocation, and thus conserves the redox energy in a proton gradient. The chain is NAD(P)H-quinone oxidoreductase subunit 4L, chloroplastic from Morus indica (Mulberry).